The chain runs to 840 residues: Probable alpha-glucuronidase A (840 aa).

The signal sequence occupies residues Met-1–Ala-19. N-linked (GlcNAc...) asparagine glycans are attached at residues Asn-222, Asn-310, Asn-465, Asn-527, Asn-576, Asn-682, and Asn-732.

Belongs to the glycosyl hydrolase 67 family.

It localises to the secreted. The enzyme catalyses an alpha-D-glucuronoside + H2O = D-glucuronate + an alcohol. In terms of biological role, alpha-glucuronidase involved in the hydrolysis of xylan, a major structural heterogeneous polysaccharide found in plant biomass representing the second most abundant polysaccharide in the biosphere, after cellulose. Releases 4-O-methylglucuronic acid from xylan. The polypeptide is Probable alpha-glucuronidase A (aguA) (Aspergillus clavatus (strain ATCC 1007 / CBS 513.65 / DSM 816 / NCTC 3887 / NRRL 1 / QM 1276 / 107)).